The chain runs to 300 residues: MKYREIILNIPKEIAEDFTTFLDEIGVAGYYEILFDREVPRAPHEEIISDDTKFRVYLAQEDNENETKILIYLKANAGEVFFSESRWIETKEYEEAYKEFYKPFIVGSYRVIPTWEKDTALGTTPEGIFPLFINPGLAFGTGHHETTRLVLGRMGNLSLSGKKVVDVGTGSGILSVAAAKSGASPILAVDVDPNSVRSASFNRDENDISSEVLAVEEGGFDHEKIQGQTWDLLIANITFAVLKANIQKIVSIKTDHFLFSGVITERLEEFLELLKNEVGGEGVFFQEDTGWELIEWKRKG.

S-adenosyl-L-methionine-binding residues include Thr-147, Gly-168, Asp-190, and Asn-236.

This sequence belongs to the methyltransferase superfamily. PrmA family.

It is found in the cytoplasm. It carries out the reaction L-lysyl-[protein] + 3 S-adenosyl-L-methionine = N(6),N(6),N(6)-trimethyl-L-lysyl-[protein] + 3 S-adenosyl-L-homocysteine + 3 H(+). In terms of biological role, methylates ribosomal protein L11. In Leptospira borgpetersenii serovar Hardjo-bovis (strain JB197), this protein is Ribosomal protein L11 methyltransferase.